Consider the following 284-residue polypeptide: Proteasome subunit pbs-5 (284 aa).

Residues 1–64 (MWGETFDDFE…AGKSMQFRKG (64 aa)) constitute a propeptide, removed in mature form. T65 (nucleophile) is an active-site residue.

The protein belongs to the peptidase T1B family. In terms of assembly, the 26S proteasome consists of a 20S proteasome core and two 19S regulatory subunits. The 20S proteasome core is composed of 28 subunits that are arranged in four stacked rings, resulting in a barrel-shaped structure. The two end rings are each formed by seven alpha subunits, and the two central rings are each formed by seven beta subunits. The catalytic chamber with the active sites is on the inside of the barrel.

The protein resides in the cytoplasm. Its subcellular location is the nucleus. The enzyme catalyses Cleavage of peptide bonds with very broad specificity.. Its function is as follows. Component of the 20S core proteasome complex involved in the proteolytic degradation of most intracellular proteins. This complex plays numerous essential roles within the cell by associating with different regulatory particles. Associated with two 19S regulatory particles, forms the 26S proteasome and thus participates in the ATP-dependent degradation of ubiquitinated proteins. The 26S proteasome plays a key role in the maintenance of protein homeostasis by removing misfolded or damaged proteins that could impair cellular functions, and by removing proteins whose functions are no longer required. The polypeptide is Proteasome subunit pbs-5 (Caenorhabditis elegans).